Here is a 167-residue protein sequence, read N- to C-terminus: Protein DLS1 (167 aa).

Ser17 is modified (phosphoserine).

Component of the ISW2 complex, which at least consists of ISW2, ITC1, DLS1 and DPB4.

The protein localises to the nucleus. Functions as a component of the ISW2 complex, which acts in remodeling the chromatin by catalyzing an ATP-dependent alteration in the structure of nucleosomal DNA. The ISW2 complex is involved in coordinating transcriptional repression and in inheritance of telomeric silencing. It is involved in repression of MAT a-specific genes, INO1, and early meiotic genes during mitotic growth dependent upon transcription factor UME6 and in a parallel pathway to the RPD3-SIN3 histone deacetylase complex. DLS1 is partially required for the ISW2 complex chromatin remodeling activity and is not required for its interaction with chromatin. The polypeptide is Protein DLS1 (DLS1) (Saccharomyces cerevisiae (strain ATCC 204508 / S288c) (Baker's yeast)).